The following is a 225-amino-acid chain: Cobalt transport protein CbiM (225 aa).

A run of 6 helical transmembrane segments spans residues 7 to 27 (VLPLGWCAFWNALALPFVAIA), 43 to 63 (PFVGLIAAAVFAISCMPVPVP), 76 to 96 (LAAVLIGPWMTVLVTVVALLI), 108 to 128 (TLGADVASMGIAGAFTGYFAF), 143 to 163 (FLAGVTSDWATYATTALALAL), and 175 to 195 (FTGVALAFVPTQLPLGLLEGV).

This sequence belongs to the CbiM family. Forms an energy-coupling factor (ECF) transporter complex composed of an ATP-binding protein (A component, CbiO), a transmembrane protein (T component, CbiQ) and 2 possible substrate-capture proteins (S components, CbiM and CbiN) of unknown stoichimetry.

Its subcellular location is the cell inner membrane. Its pathway is cofactor biosynthesis; adenosylcobalamin biosynthesis. Functionally, part of the energy-coupling factor (ECF) transporter complex CbiMNOQ involved in cobalt import. The chain is Cobalt transport protein CbiM from Sorangium cellulosum (strain So ce56) (Polyangium cellulosum (strain So ce56)).